The primary structure comprises 325 residues: RNA ligase 1 (325 aa).

Mg(2+) serves as cofactor. Requires Mn(2+) as cofactor. Post-translationally, AMPylates itself (auto-AMPylation).

It catalyses the reaction ATP + (ribonucleotide)n-3'-hydroxyl + 5'-phospho-(ribonucleotide)m = (ribonucleotide)n+m + AMP + diphosphate.. In terms of biological role, functions as an RNA ligase, in vitro. The ligation reaction entails three nucleotidyl transfer steps. In the first step, the RNA ligase reacts with ATP in the absence of nucleic acid to form a covalent ligase-AMP intermediate and release pyrophosphate. In step 2, the ligase-AMP binds to the nucleic acid and transfers the adenylate to the 5'-PO4 terminus to form an adenylylated intermediate. In step 3, the RNA ligase directs the attack of the 3'-OH on the 5'-phosphoanhydride linkage, resulting in a repaired 3'-5' phosphodiester and release of AMP. Exhibits selectivity for single-stranded RNA substrates and may not have nick-sealing activity on double-stranded DNA-RNA hybrids. May play a role in maintaining RNA integrity under stress conditions, for example in response to reactive oxygen species (ROS). This chain is RNA ligase 1, found in Rattus norvegicus (Rat).